The primary structure comprises 508 residues: Cytochrome P450 monooxygenase lepD (508 aa).

Residues 22-42 traverse the membrane as a helical segment; it reads IAAAVAVVASIVIYLALSSFF. N53 and N416 each carry an N-linked (GlcNAc...) asparagine glycan. Residue C454 participates in heme binding.

It belongs to the cytochrome P450 family. Heme serves as cofactor.

It is found in the membrane. Functionally, cytochrome P450 monooxygenase; part of the gene cluster 23 that mediates the biosynthesis of a family of 2-pyridones known as leporins. The hybrid PKS-NRPS synthetase lepA and the enoyl reductase lepG are responsible for fusion of phenylalanine with a hexaketide and subsequent release of the stable tetramic acid precursor, pre-leporin C. Because lepA lacks a designated enoylreductase (ER) domain, the required activity is provided the enoyl reductase lepG. It is possible that the dehydrogenase lepF also participates in production of pre-leporin C. Cytochrome P450 monooxygenase lepH is then required for the ring expansion step to yield leporin C. Leporin C is then presumably further oxidized by the N-hydroxylase lepD to form leporin B. LepI may possess a function in biosynthesis upstream of lepA. Leporin B is further oxidized in the presence of ferric ion to give the leporin B trimer-iron chelate, but whether or not this reaction is catalyzed by an enzyme in the pathway or by ferric ion is not determined yet. The polypeptide is Cytochrome P450 monooxygenase lepD (Aspergillus flavus (strain ATCC 200026 / FGSC A1120 / IAM 13836 / NRRL 3357 / JCM 12722 / SRRC 167)).